The primary structure comprises 811 residues: Leucine--tRNA ligase (811 aa).

A 'HIGH' region motif is present at residues 40–50; sequence PYPSGRLHMGH. A 'KMSKS' region motif is present at residues 579–583; it reads KMSKS. Lys582 contacts ATP.

It belongs to the class-I aminoacyl-tRNA synthetase family.

The protein localises to the cytoplasm. It catalyses the reaction tRNA(Leu) + L-leucine + ATP = L-leucyl-tRNA(Leu) + AMP + diphosphate. This Campylobacter fetus subsp. fetus (strain 82-40) protein is Leucine--tRNA ligase.